We begin with the raw amino-acid sequence, 235 residues long: Modulator of macroautophagy TMEM150B (235 aa).

The Cytoplasmic segment spans residues M1–L8. A helical transmembrane segment spans residues P9–V29. The Extracellular segment spans residues N30–Q51. N-linked (GlcNAc...) asparagine glycosylation occurs at N34. A helical membrane pass occupies residues S52 to L72. Residues R73 to Q88 lie on the Cytoplasmic side of the membrane. The helical transmembrane segment at V89 to E109 threads the bilayer. The Extracellular portion of the chain corresponds to K110–H116. Residues L117–L137 traverse the membrane as a helical segment. Residues S138–R156 are Cytoplasmic-facing. A helical transmembrane segment spans residues L157–S177. The Extracellular portion of the chain corresponds to M178–S180. Residues V181–A201 form a helical membrane-spanning segment. The Cytoplasmic segment spans residues V202–L235.

This sequence belongs to the DRAM/TMEM150 family.

It is found in the cell membrane. The protein localises to the endosome membrane. The protein resides in the cytoplasmic vesicle. Its subcellular location is the autophagosome membrane. Functionally, modulator of macroautophagy that causes accumulation of autophagosomes under basal conditions and enhances autophagic flux. Represses cell death and promotes long-term clonogenic survival of cells grown in the absence of glucose in a macroautophagy-independent manner. May have some role in extracellular matrix engulfment or growth factor receptor recycling, both of which can modulate cell survival. The sequence is that of Modulator of macroautophagy TMEM150B from Bos taurus (Bovine).